Here is a 2336-residue protein sequence, read N- to C-terminus: RNA1 polyprotein (2336 aa).

Residues 599–1210 (QVARIARNIF…YLKEHGLEVL (612 aa)) lie on the Cytoplasmic side of the membrane. Residues 797 to 964 (MKDLLDLQQR…PGVVFDPMDC (168 aa)) form the SF3 helicase domain. 827 to 834 (GPSHCGKS) serves as a coordination point for ATP. A helical transmembrane segment spans residues 1211 to 1231 (LLLAAMMILCVALYYFVGAFI). The Lumenal portion of the chain corresponds to 1232 to 1253 (GVMGGALSMGAAMAGLKEVDMK). A Peptidase C3 domain is found at 1278–1486 (YARGELDEEV…WADNLPNPCM (209 aa)). Active-site for picornain 3C-like protease activity residues include His1320, Glu1358, and Cys1450. Residues 1771–1899 (DRAINCDYSS…SCTDKIAIYF (129 aa)) form the RdRp catalytic domain.

The protein belongs to the nepoviruses RNA1 polyprotein family. Specific enzymatic cleavages by picornain 3C-like protease in vivo yield mature proteins. Picornain 3C-like protease is autocatalytically processed. In terms of processing, VPg is uridylylated by the polymerase and is covalently linked to the 5'-end of genomic RNA. This uridylylated form acts as a nucleotide-peptide primer for the polymerase.

It localises to the host endoplasmic reticulum lumen. The protein localises to the host endoplasmic reticulum membrane. The catalysed reaction is RNA(n) + a ribonucleoside 5'-triphosphate = RNA(n+1) + diphosphate. Its function is as follows. Picornain 3C-like protease is a thiol protease that cleaves the P1 and P2 polyproteins. The polypeptide is RNA1 polyprotein (Cycas necrotic stunt virus (CNSV)).